Consider the following 480-residue polypeptide: PTS system sucrose-specific EIIBC component (480 aa).

The PTS EIIB type-1 domain occupies 4 to 87 (KKSAENILQA…EKITGKEASS (84 aa)). Cys26 acts as the Phosphocysteine intermediate; for EIIB activity in catalysis. 8 consecutive transmembrane segments (helical) span residues 109-129 (LSDI…LMGI), 158-178 (MINI…GFSA), 182-202 (FGGN…PELM), 264-284 (LLTP…FVGP), 303-323 (FGGA…VITG), 349-369 (PIAT…FFII), 405-425 (PFIG…FFKV), and 449-469 (LHYG…TYAL). The 361-residue stretch at 120 to 480 (IVAGGLLMGI…YRKKYRNIEA (361 aa)) folds into the PTS EIIC type-1 domain.

The protein localises to the cell membrane. It catalyses the reaction N(pros)-phospho-L-histidyl-[protein](out) + sucrose = sucrose 6(G)-phosphate(in) + L-histidyl-[protein]. In terms of biological role, the phosphoenolpyruvate-dependent sugar phosphotransferase system (sugar PTS), a major carbohydrate active transport system, catalyzes the phosphorylation of incoming sugar substrates concomitantly with their translocation across the cell membrane. This system is involved in sucrose transport. The sequence is that of PTS system sucrose-specific EIIBC component from Staphylococcus xylosus.